The chain runs to 555 residues: Formate--tetrahydrofolate ligase (555 aa).

65-72 lines the ATP pocket; sequence TPAGEGKS.

It belongs to the formate--tetrahydrofolate ligase family.

It carries out the reaction (6S)-5,6,7,8-tetrahydrofolate + formate + ATP = (6R)-10-formyltetrahydrofolate + ADP + phosphate. It functions in the pathway one-carbon metabolism; tetrahydrofolate interconversion. In Staphylococcus haemolyticus (strain JCSC1435), this protein is Formate--tetrahydrofolate ligase.